The chain runs to 1631 residues: MGSVGLLGLLLLRLSVTASGSGAGTGSGTGSGTGTGTGQLVGSPATGPALQPREPLSYSRLQRKSLAVDFVVPSLFRVYARDLLLPPWSSSEPRAGWTEARGSLALDCAPLLRLLGPPPGVSWAEGASSPAPAQARTLTRVLKGGSVRKLRRAKQLVLELGEEAILEGCVGPSPEEVTAGLLQFNLSELFSWWIRHGEGRLRIRLMPEKKASAVGREGRLSAAIRASQPRLLFQILGTGHSSLESPTSLPSPPPDPFAWNLTWIMKDSFPFLSHRSRYGLECSFDFPCELEYSPPLHDLGNQSWSWRRVPSEEASQMDLLDGPETEHSKEMPRGSFLLLNTSANSKHTILSPWMRSSSEHCKLAVSVHRHLQPSGRYVAQLLPHNEPGREILLVPTPGKHGWTVLQGRIGRPENPFRVALEYISSGNRSLSAVDFFALKNCSEGTSPGSKMALQSSFTCWNGTVLQLGQACDFHQDCAQGEDEGQLCSQLPAGFYCNFENGFCGWSQGILTPHNPRWQVRTLKDARVQDHRGHALSLSTTDVPTSESATVTSATFPAPMKNSPCELRMSWLIHGVLRGNVSLVLVENKTGKEQSRMVWHVATNEGLSLWQWTVLPLLDVADRFWLQIVAWWGQGSRATVAFDNISISLDCYLTISGEEKMLQNTAPKSRNLFERNPNKDPRPWENTRETPVFDPTVHWLFTTCGASGPHGPTQAQCNNAYRNSNLSVVVGSEGPLKGIQTWKVPATDTYSISGYGAAGGKGGKNTMMRSHGVSVLGIFNLEKGDTLYILVGQQGEDACPSTNRLIQKVCIGENNVIEEEIRVNRSVHEWAGGGGGGGGATYVFKMKDGVPVPLIIAAGGGGRAYGAKTDTFHPERLENNSSVLGLNGNSGAAGGGGGWNDNTSLLWSGKSLLEGATGGHSCPQAMKKWGWETRGGFGGGGGGCSSGGGGGGYIGGNAASNNDPEMDGEDGVSFISPLGILYTPALKVMEGHGEVNIKHYLNCSHCEGDECHMDPESHKVICFCDHGTVLAEDGVSCIVSPTPEPHLPLSLVLSVVTSALVAALVLAFSGIMIVYRRKHQELQAMQMELQSPEYKLSKLRTSTIMTDYNPNYCFAGKTSSISDLKEVPRKNITLIRGLGHGAFGEVYEGQVSGVPSDPSPLQVAVKTLPEVCSEQDELDFLMEALIISKFNHQNIVRCIGVSLQALPRFILLELMAGGDLKSFLRETRPRPNQPSSLAMLDLLHVAQDIACGCQYLEENHFIHRDIAARNCLLTCPGPGRVAKIGDFGMARDIYRASYYRKGGCAMLPVKWMPPEAFMEGIFTSKTDTWSFGVLLWEIFSLGYMPYPSKSNQEVLEFVTSGGRMDPPKNCPGPVYRIMTQCWQHQPEDRPNFAIILERIEYCTQDPDVINTALPVEYGPLMEEEEKVPMRPQDPEGIPPLLVSPPQAKREEGPDPAAPPPLPSTSSGKAAKKPTAAELSGRVTRGPAVEGGHVNMAFSQSNPASELHKVQGSRNKPTSLWNPTYGSWFTEKPTKKNNPPATKGHHDRGNLGREGSCTVPPNVAAGRLPGASLLLEPSSLTASMKEVPLFRLRHFPCGNVNYGYQQQGLPFEGTTAPGSSQYEDALLKTPPGP.

Positions 1 to 18 (MGSVGLLGLLLLRLSVTA) are cleaved as a signal peptide. Topologically, residues 19–1053 (SGSGAGTGSG…PHLPLSLVLS (1035 aa)) are extracellular. Positions 20–53 (GSGAGTGSGTGSGTGTGTGQLVGSPATGPALQPR) are disordered. The span at 21 to 39 (SGAGTGSGTGSGTGTGTGQ) shows a compositional bias: gly residues. The segment at 60–82 (RLQRKSLAVDFVVPSLFRVYARD) is heparin-binding region. N-linked (GlcNAc...) asparagine glycosylation is found at N185, N260, N301, N340, N427, N440, N461, N579, N587, and N643. The MAM 1 domain occupies 280–443 (LECSFDFPCE…DFFALKNCSE (164 aa)). The MAM 2 domain occupies 494–652 (FYCNFENGFC…NISISLDCYL (159 aa)). A disulfide bridge links C703 with C716. N724 is a glycosylation site (N-linked (GlcNAc...) asparagine). C798 and C809 form a disulfide bridge. Residues N823, N878, N879, and N901 are each glycosylated (N-linked (GlcNAc...) asparagine). C921 and C943 are oxidised to a cystine. A glycan (N-linked (GlcNAc...) asparagine) is linked at N1001. Cystine bridges form between C1002–C1010, C1005–C1021, and C1023–C1036. Residues 1002 to 1040 (CSHCEGDECHMDPESHKVICFCDHGTVLAEDGVSCIVSP) are EGF-like. The chain crosses the membrane as a helical span at residues 1054–1074 (VVTSALVAALVLAFSGIMIVY). Residues 1075-1631 (RRKHQELQAM…DALLKTPPGP (557 aa)) lie on the Cytoplasmic side of the membrane. The Protein kinase domain occupies 1131 to 1407 (ITLIRGLGHG…IEYCTQDPDV (277 aa)). ATP is bound by residues 1137–1145 (LGHGAFGEV) and K1165. D1264 functions as the Proton acceptor in the catalytic mechanism. 3 disordered regions span residues 1423-1493 (EEKV…GHVN), 1526-1554 (WFTE…REGS), and 1609-1631 (FEGT…PPGP).

In terms of assembly, homodimer; homodimerizes following heparin- and ligand-binding. Interacts with CBL, IRS1, PIK3R1 and PLCG1. Interacts with FRS2 and SHC1. Interacts with PTN and MDK. Post-translationally, phosphorylated at tyrosine residues by autocatalysis, which activates kinase activity. In cells not stimulated by a ligand, receptor protein tyrosine phosphatase beta and zeta complex (PTPRB/PTPRZ1) dephosphorylates ALK at the sites in ALK that are undergoing autophosphorylation through autoactivation.

The protein resides in the cell membrane. The catalysed reaction is L-tyrosyl-[protein] + ATP = O-phospho-L-tyrosyl-[protein] + ADP + H(+). With respect to regulation, activated upon ALKAL2 ligand-binding. ALKAL2-driven activation is coupled with heparin-binding. Following ligand-binding, homodimerizes and autophosphorylates, activating its kinase activity. Inactivated through dephosphorylation by receptor protein tyrosine phosphatase beta and zeta complex (PTPRB/PTPRZ1) when there is no stimulation by a ligand. Its function is as follows. Neuronal receptor tyrosine kinase that is essentially and transiently expressed in specific regions of the central and peripheral nervous systems and plays an important role in the genesis and differentiation of the nervous system. Also acts as a key thinness protein involved in the resistance to weight gain: in hypothalamic neurons, controls energy expenditure acting as a negative regulator of white adipose tissue lipolysis and sympathetic tone to fine-tune energy homeostasis. Following activation by ALKAL2 ligand at the cell surface, transduces an extracellular signal into an intracellular response. In contrast, ALKAL1 is not a potent physiological ligand for ALK. Ligand-binding to the extracellular domain induces tyrosine kinase activation, leading to activation of the mitogen-activated protein kinase (MAPK) pathway. Phosphorylates almost exclusively at the first tyrosine of the Y-x-x-x-Y-Y motif. Induces tyrosine phosphorylation of CBL, FRS2, IRS1 and SHC1, as well as of the MAP kinases MAPK1/ERK2 and MAPK3/ERK1. ALK activation may also be regulated by pleiotrophin (PTN) and midkine (MDK). PTN-binding induces MAPK pathway activation, which is important for the anti-apoptotic signaling of PTN and regulation of cell proliferation. MDK-binding induces phosphorylation of the ALK target insulin receptor substrate (IRS1), activates mitogen-activated protein kinases (MAPKs) and PI3-kinase, resulting also in cell proliferation induction. Drives NF-kappa-B activation, probably through IRS1 and the activation of the AKT serine/threonine kinase. Recruitment of IRS1 to activated ALK and the activation of NF-kappa-B are essential for the autocrine growth and survival signaling of MDK. The sequence is that of ALK tyrosine kinase receptor from Canis lupus familiaris (Dog).